Here is a 249-residue protein sequence, read N- to C-terminus: METVILFPAIDLKSGQCVRLEQGDMARATVFNLDPVEQARAFAAQGFEYLHVVDLDGAFAGKPVNADAVERVLRNVALPMQLGGGIRDLKTVEAWLGKGVARVIIGTAAVRDPVLVREAAKAFPGRVAVGLDARDGKVAVEGWAETSEVTALDIARRFEDAGIAAIIFTDIARDGLLKGLNLDATIALADSISIPVIASGGFASIADVKALLEPRAKKLAGAISGRALYDGRLDPVEALKLIHAARAAA.

The Proton acceptor role is filled by aspartate 11. The active-site Proton donor is the aspartate 132.

It belongs to the HisA/HisF family.

It is found in the cytoplasm. The catalysed reaction is 1-(5-phospho-beta-D-ribosyl)-5-[(5-phospho-beta-D-ribosylamino)methylideneamino]imidazole-4-carboxamide = 5-[(5-phospho-1-deoxy-D-ribulos-1-ylimino)methylamino]-1-(5-phospho-beta-D-ribosyl)imidazole-4-carboxamide. The protein operates within amino-acid biosynthesis; L-histidine biosynthesis; L-histidine from 5-phospho-alpha-D-ribose 1-diphosphate: step 4/9. This Nitrobacter winogradskyi (strain ATCC 25391 / DSM 10237 / CIP 104748 / NCIMB 11846 / Nb-255) protein is 1-(5-phosphoribosyl)-5-[(5-phosphoribosylamino)methylideneamino] imidazole-4-carboxamide isomerase.